We begin with the raw amino-acid sequence, 492 residues long: Spore germination protein XA (492 aa).

7 helical membrane-spanning segments follow: residues 246-266, 285-305, 325-345, 353-373, 377-397, 413-433, and 442-462; these read FILLVDGSPTATIAPVSFPFF, LLSLFGIAISIFLPGFWVALV, EGIPFPAPLEGMIMITLFELL, PAAFGQTLSVVGGLIIGQAAI, FVSPSMVVMIAISVVSTFTLV, FLMSSFLGIVGFICSILLIVI, and GLPFLAPYSPPVFSSMLPSTF.

Belongs to the GerABKA family.

It localises to the cell membrane. Its function is as follows. May allow B.anthracis to germinate within phagocytic cells and therefore involved in virulence. This Bacillus anthracis protein is Spore germination protein XA (gerXA).